Reading from the N-terminus, the 111-residue chain is MAKIQFSRGLDEEVIPEVRLTRSRTGDTGTATFIFTNPKILDQGTTEDITGMYLIDEEGEIITREVKGKFINGRPEGLEAVYVMKSAQEWERFIRFMERYAQENDLGFSKS.

The protein belongs to the Psb28 family. As to quaternary structure, part of the photosystem II complex.

It localises to the cellular thylakoid membrane. In Nostoc sp. (strain PCC 7120 / SAG 25.82 / UTEX 2576), this protein is Photosystem II reaction center Psb28 protein.